Consider the following 627-residue polypeptide: Pentatricopeptide repeat-containing protein At2g35030, mitochondrial (627 aa).

Residues 1-44 (MQSRALSRLRSYYKRSSVFPSSDNDRSVQLFNLVRSIYSSSSRP) constitute a mitochondrion transit peptide. PPR repeat units follow at residues 45–75 (RVPQ…LPER), 76–110 (DVVT…KNVV), 111–138 (TWTA…MPER), 139–173 (NVVS…NIVS), 174–200 (WNSM…MPRR), 201–235 (DVVS…NIIS), 236–262 (WNAM…MPER), 263–293 (DFAS…MPEK), 294–328 (NVIS…GSVK), 330–360 (NVGT…ISKS), 365–396 (NEIV…LVCQ), 398–432 (DLIS…GFKP), 433–467 (SAVT…ESLP), and 469–499 (REEH…DDAR). The tract at residues 504 to 579 (FYGAILSACN…QPGCSWVKVG (76 aa)) is type E motif. Positions 580–610 (KQNHLFVVGDKSHPQFEALDSILSDLRNKMR) are type E(+) motif.

This sequence belongs to the PPR family. PCMP-E subfamily.

The protein resides in the mitochondrion. This is Pentatricopeptide repeat-containing protein At2g35030, mitochondrial (PCMP-E15) from Arabidopsis thaliana (Mouse-ear cress).